A 782-amino-acid polypeptide reads, in one-letter code: uncharacterized protein (782 aa).

Disordered regions lie at residues 1–127, 205–234, and 308–355; these read MTTT…SAMK, NAAA…SYNP, and PYNF…SYLR. Positions 24–54 are enriched in basic and acidic residues; that stretch reads KPQEEPTMKDKALLFEKQRQEKKMKHTEAKM. Over residues 82–118 the composition is skewed to low complexity; sequence KNVNNATSTNNATSTKNNTKNTPKNTPKNIPKNTTAK. A compositionally biased stretch (polar residues) spans 312–324; sequence ARNNHGSDVSSAM. Over residues 326–336 the composition is skewed to basic and acidic residues; sequence NARRQASETRR. The segment covering 337 to 346 has biased composition (polar residues); the sequence is SNLSSYNDRN. The stretch at 361–628 forms a coiled coil; it reads MEKIRTEVDK…ERLRERLREL (268 aa). Residues 629 to 668 are compositionally biased toward basic and acidic residues; the sequence is GSRDRSYNRSSRDRSHDRLYERSPRSRDRSSRDRSRDRYS. The disordered stretch occupies residues 629–689; that stretch reads GSRDRSYNRS…SDSVKDYSVG (61 aa). A compositionally biased stretch (basic residues) spans 669–678; it reads RSRSRSRYRR. Residues 679 to 689 are compositionally biased toward basic and acidic residues; that stretch reads RSDSVKDYSVG.

This is an uncharacterized protein from Yarrowia lipolytica (strain CLIB 122 / E 150) (Yeast).